The chain runs to 418 residues: Glutamyl-tRNA reductase (418 aa).

Substrate is bound by residues 49–52 (TCNR), Ser-109, 114–116 (EPQ), and Gln-120. Cys-50 (nucleophile) is an active-site residue. 189–194 (GAGETI) contributes to the NADP(+) binding site.

This sequence belongs to the glutamyl-tRNA reductase family. Homodimer.

It carries out the reaction (S)-4-amino-5-oxopentanoate + tRNA(Glu) + NADP(+) = L-glutamyl-tRNA(Glu) + NADPH + H(+). It functions in the pathway porphyrin-containing compound metabolism; protoporphyrin-IX biosynthesis; 5-aminolevulinate from L-glutamyl-tRNA(Glu): step 1/2. Its function is as follows. Catalyzes the NADPH-dependent reduction of glutamyl-tRNA(Glu) to glutamate 1-semialdehyde (GSA). In Klebsiella pneumoniae subsp. pneumoniae (strain ATCC 700721 / MGH 78578), this protein is Glutamyl-tRNA reductase.